We begin with the raw amino-acid sequence, 196 residues long: Peptide deformylase (196 aa).

2 residues coordinate Fe cation: Cys105 and His147. Residue Glu148 is part of the active site. His151 is a binding site for Fe cation.

Belongs to the polypeptide deformylase family. Requires Fe(2+) as cofactor.

The catalysed reaction is N-terminal N-formyl-L-methionyl-[peptide] + H2O = N-terminal L-methionyl-[peptide] + formate. Removes the formyl group from the N-terminal Met of newly synthesized proteins. Requires at least a dipeptide for an efficient rate of reaction. N-terminal L-methionine is a prerequisite for activity but the enzyme has broad specificity at other positions. This Christiangramia forsetii (strain DSM 17595 / CGMCC 1.15422 / KT0803) (Gramella forsetii) protein is Peptide deformylase.